Consider the following 215-residue polypeptide: Probable transaldolase (215 aa).

Residue Lys-83 is the Schiff-base intermediate with substrate of the active site.

The protein belongs to the transaldolase family. Type 3B subfamily.

Its subcellular location is the cytoplasm. The enzyme catalyses D-sedoheptulose 7-phosphate + D-glyceraldehyde 3-phosphate = D-erythrose 4-phosphate + beta-D-fructose 6-phosphate. Its pathway is carbohydrate degradation; pentose phosphate pathway; D-glyceraldehyde 3-phosphate and beta-D-fructose 6-phosphate from D-ribose 5-phosphate and D-xylulose 5-phosphate (non-oxidative stage): step 2/3. Transaldolase is important for the balance of metabolites in the pentose-phosphate pathway. The chain is Probable transaldolase from Methanococcus maripaludis (strain C5 / ATCC BAA-1333).